The sequence spans 130 residues: Small ribosomal subunit protein uS12c (130 aa).

The protein belongs to the universal ribosomal protein uS12 family. Part of the 30S ribosomal subunit.

The protein localises to the plastid. Its subcellular location is the chloroplast. Functionally, with S4 and S5 plays an important role in translational accuracy. Located at the interface of the 30S and 50S subunits. The protein is Small ribosomal subunit protein uS12c (rps12) of Tetradesmus obliquus (Green alga).